The following is a 229-amino-acid chain: Large ribosomal subunit protein uL1 (229 aa).

The protein belongs to the universal ribosomal protein uL1 family. As to quaternary structure, part of the 50S ribosomal subunit.

Its function is as follows. Binds directly to 23S rRNA. The L1 stalk is quite mobile in the ribosome, and is involved in E site tRNA release. Protein L1 is also a translational repressor protein, it controls the translation of the L11 operon by binding to its mRNA. In Streptococcus pneumoniae (strain JJA), this protein is Large ribosomal subunit protein uL1.